Here is a 386-residue protein sequence, read N- to C-terminus: Ribosomal large subunit pseudouridine synthase B (386 aa).

The S4 RNA-binding domain occupies 14 to 75 (EKLQKVLARL…IRREEAAESV (62 aa)). Catalysis depends on D119, which acts as the Nucleophile. Positions 260 to 386 (ALPGMTTKAR…GDGMRPGFRR (127 aa)) are disordered. Composition is skewed to basic and acidic residues over residues 267-276 (KAREKAERQQ) and 284-306 (ARSERPEAGRKRAPRREDGENAA). Positions 307 to 321 (RRAPASRPARGPQPS) are enriched in low complexity. The span at 335 to 354 (ERPRESNRKPRPSKPRDERP) shows a compositional bias: basic and acidic residues.

This sequence belongs to the pseudouridine synthase RsuA family.

The catalysed reaction is uridine(2605) in 23S rRNA = pseudouridine(2605) in 23S rRNA. In terms of biological role, responsible for synthesis of pseudouridine from uracil-2605 in 23S ribosomal RNA. In Pseudomonas aeruginosa (strain ATCC 15692 / DSM 22644 / CIP 104116 / JCM 14847 / LMG 12228 / 1C / PRS 101 / PAO1), this protein is Ribosomal large subunit pseudouridine synthase B (rluB).